The chain runs to 388 residues: Sulfate adenylyltransferase (388 aa).

It belongs to the sulfate adenylyltransferase family.

The catalysed reaction is sulfate + ATP + H(+) = adenosine 5'-phosphosulfate + diphosphate. It functions in the pathway sulfur metabolism; hydrogen sulfide biosynthesis; sulfite from sulfate: step 1/3. In Acaryochloris marina (strain MBIC 11017), this protein is Sulfate adenylyltransferase.